Here is a 104-residue protein sequence, read N- to C-terminus: NADH-quinone oxidoreductase subunit K (104 aa).

A run of 3 helical transmembrane segments spans residues 4–24 (VPAS…LFGA), 31–51 (VIVL…LVAF), and 67–87 (LFTM…LIAL).

It belongs to the complex I subunit 4L family. In terms of assembly, NDH-1 is composed of 14 different subunits. Subunits NuoA, H, J, K, L, M, N constitute the membrane sector of the complex.

The protein resides in the cell membrane. The enzyme catalyses a quinone + NADH + 5 H(+)(in) = a quinol + NAD(+) + 4 H(+)(out). NDH-1 shuttles electrons from NADH, via FMN and iron-sulfur (Fe-S) centers, to quinones in the respiratory chain. The immediate electron acceptor for the enzyme in this species is believed to be a menaquinone. Couples the redox reaction to proton translocation (for every two electrons transferred, four hydrogen ions are translocated across the cytoplasmic membrane), and thus conserves the redox energy in a proton gradient. The chain is NADH-quinone oxidoreductase subunit K from Bacillus cytotoxicus (strain DSM 22905 / CIP 110041 / 391-98 / NVH 391-98).